The sequence spans 682 residues: Tail-specific protease (682 aa).

The first 22 residues, 1–22, serve as a signal peptide directing secretion; sequence MNTFFRLTALAGLLALAGQSFA. The PDZ domain occupies 238 to 322; that stretch reads NTEMSLSLEG…SKVRLEILPA (85 aa). Active-site charge relay system residues include Ser-452, Asp-463, and Lys-477.

Belongs to the peptidase S41A family.

Its subcellular location is the cell inner membrane. The catalysed reaction is The enzyme shows specific recognition of a C-terminal tripeptide, Xaa-Yaa-Zaa, in which Xaa is preferably Ala or Leu, Yaa is preferably Ala or Tyr, and Zaa is preferably Ala, but then cleaves at a variable distance from the C-terminus. A typical cleavage is -Ala-Ala-|-Arg-Ala-Ala-Lys-Glu-Asn-Tyr-Ala-Leu-Ala-Ala.. In terms of biological role, involved in the cleavage of a C-terminal peptide of 11 residues from the precursor form of penicillin-binding protein 3 (PBP3). May be involved in protection of the bacterium from thermal and osmotic stresses. The polypeptide is Tail-specific protease (prc) (Salmonella typhimurium (strain LT2 / SGSC1412 / ATCC 700720)).